We begin with the raw amino-acid sequence, 179 residues long: Shikimate kinase (179 aa).

Residue Gly11–Thr16 participates in ATP binding. A Mg(2+)-binding site is contributed by Thr15. Substrate-binding residues include Asp33, Arg57, and Gly79. Arg118 lines the ATP pocket. Arg140 contributes to the substrate binding site.

Belongs to the shikimate kinase family. As to quaternary structure, monomer. The cofactor is Mg(2+).

The protein localises to the cytoplasm. The enzyme catalyses shikimate + ATP = 3-phosphoshikimate + ADP + H(+). It functions in the pathway metabolic intermediate biosynthesis; chorismate biosynthesis; chorismate from D-erythrose 4-phosphate and phosphoenolpyruvate: step 5/7. In terms of biological role, catalyzes the specific phosphorylation of the 3-hydroxyl group of shikimic acid using ATP as a cosubstrate. The polypeptide is Shikimate kinase (Bacteroides fragilis (strain ATCC 25285 / DSM 2151 / CCUG 4856 / JCM 11019 / LMG 10263 / NCTC 9343 / Onslow / VPI 2553 / EN-2)).